We begin with the raw amino-acid sequence, 102 residues long: Bowman-Birk type wound-induced proteinase inhibitor WIP1 (102 aa).

A signal peptide spans 1-15 (MKSSPHLVLILCLQA). 5 disulfide bridges follow: Cys46-Cys102, Cys47-Cys60, Cys50-Cys98, Cys67-Cys74, and Cys71-Cys90.

Belongs to the Bowman-Birk serine protease inhibitor family.

The chain is Bowman-Birk type wound-induced proteinase inhibitor WIP1 (WIP1) from Zea mays (Maize).